Consider the following 1326-residue polypeptide: Putative late blight resistance protein homolog R1B-19 (1326 aa).

Coiled-coil stretches lie at residues 421–444 and 536–558; these read RYSD…ESLQ and PRMK…KLLN. An ATP-binding site is contributed by 570 to 577; that stretch reads GMPGLGKT. The 254-residue stretch at 611–864 folds into the NB-ARC domain; sequence LLSLLCDTIG…KVKTCRLHDV (254 aa). A coiled-coil region spans residues 749–770; it reads SEMEKEVECWEQVANNLGTRIH. LRR repeat units lie at residues 953–978, 980–996, 1027–1050, 1053–1070, 1071–1094, 1098–1118, 1119–1146, 1167–1191, and 1208–1230; these read FKFL…VYLK, FSAH…IYNL, LRHL…SAKL, LETL…LNFP, IRLE…ISAP, YLKL…ADHL, KNLE…MFPQ, FPNL…AMNI, and LIEK…AFKR. The HMA domain maps to 1209 to 1278; it reads IEKKTLKLNL…AWHARVVVPT (70 aa).

This sequence belongs to the disease resistance NB-LRR family.

The protein resides in the cytoplasm. It is found in the membrane. Its function is as follows. Confers resistance to late blight (Phytophthora infestans) races carrying the avirulence gene Avr1. Resistance proteins guard the plant against pathogens that contain an appropriate avirulence protein via an indirect interaction with this avirulence protein. That triggers a defense system including the hypersensitive response, which restricts the pathogen growth. This is Putative late blight resistance protein homolog R1B-19 (R1B-19) from Solanum demissum (Wild potato).